The chain runs to 85 residues: DNA-directed RNA polymerase subunit omega (85 aa).

This sequence belongs to the RNA polymerase subunit omega family. In terms of assembly, the RNAP catalytic core consists of 2 alpha, 1 beta, 1 beta' and 1 omega subunit. When a sigma factor is associated with the core the holoenzyme is formed, which can initiate transcription.

The catalysed reaction is RNA(n) + a ribonucleoside 5'-triphosphate = RNA(n+1) + diphosphate. Functionally, promotes RNA polymerase assembly. Latches the N- and C-terminal regions of the beta' subunit thereby facilitating its interaction with the beta and alpha subunits. The chain is DNA-directed RNA polymerase subunit omega from Tropheryma whipplei (strain TW08/27) (Whipple's bacillus).